Here is a 529-residue protein sequence, read N- to C-terminus: Bifunctional purine biosynthesis protein PurH (529 aa).

One can recognise an MGS-like domain in the interval 1–148; that stretch reads MQQRRPVRRA…KNHKDVAIVV (148 aa).

Belongs to the PurH family.

The catalysed reaction is (6R)-10-formyltetrahydrofolate + 5-amino-1-(5-phospho-beta-D-ribosyl)imidazole-4-carboxamide = 5-formamido-1-(5-phospho-D-ribosyl)imidazole-4-carboxamide + (6S)-5,6,7,8-tetrahydrofolate. It carries out the reaction IMP + H2O = 5-formamido-1-(5-phospho-D-ribosyl)imidazole-4-carboxamide. Its pathway is purine metabolism; IMP biosynthesis via de novo pathway; 5-formamido-1-(5-phospho-D-ribosyl)imidazole-4-carboxamide from 5-amino-1-(5-phospho-D-ribosyl)imidazole-4-carboxamide (10-formyl THF route): step 1/1. It functions in the pathway purine metabolism; IMP biosynthesis via de novo pathway; IMP from 5-formamido-1-(5-phospho-D-ribosyl)imidazole-4-carboxamide: step 1/1. The polypeptide is Bifunctional purine biosynthesis protein PurH (Citrobacter koseri (strain ATCC BAA-895 / CDC 4225-83 / SGSC4696)).